Reading from the N-terminus, the 432-residue chain is CLOCK-interacting pacemaker (432 aa).

Disordered regions lie at residues 71 to 98 (ADSD…SEDM) and 194 to 315 (SYTK…SSPL). Ser-246 bears the Phosphoserine mark. Over residues 272 to 283 (SPQTLQPVSSSH) the composition is skewed to polar residues. Positions 364-395 (EITLKTKELIRQNQATQAELDQLKEQTQMFIE) form a coiled coil. The interval 408–432 (LQASLTSGSSHSGSDLDTLSDHPDV) is disordered. Positions 411–424 (SLTSGSSHSGSDLD) are enriched in low complexity.

In terms of assembly, interacts with CLOCK. Forms a ternary complex with the CLOCK-BMAL1 heterodimer. Interacts with CAD and HSPA5. In terms of tissue distribution, expressed in the heart, kidney and liver and shows a circadian oscillation in these tissues with a peak at circadian time 14 hours (at protein level). Expressed in the brain, including the suprachiasmatic nucleus (SCN) of the brain, and in multiple peripheral tissues such as heart, liver and kidney. Exhibits a circadian oscillation in the peripheral tissues with a peak at circadian time 14 hours.

Its subcellular location is the nucleus. It is found in the cytoplasm. The protein resides in the cytosol. Its function is as follows. Transcriptional repressor which may act as a negative-feedback regulator of CLOCK-BMAL1 transcriptional activity in the circadian-clock mechanism. May stimulate BMAL1-dependent phosphorylation of CLOCK. However, the physiological relevance of these observations is unsure, since experiments in knockout mice showed that CIPC is not critially required for basic circadian clock. The sequence is that of CLOCK-interacting pacemaker (Cipc) from Mus musculus (Mouse).